Here is a 501-residue protein sequence, read N- to C-terminus: Aldehyde dehydrogenase 1A1 (501 aa).

An N-acetylserine modification is found at S2. An N6-acetyllysine mark is found at K91 and K128. Residues I167 to N170, K193 to E196, G226 to P227, and G246 to S247 each bind NAD(+). An N6-acetyllysine modification is found at K252. E269 acts as the Proton acceptor in catalysis. E269–G271 serves as a coordination point for NAD(+). C303 (nucleophile) is an active-site residue. Residues L336 to S501 are mediates interaction with PRMT3. Residue T337 is modified to Phosphothreonine. E349 to K353 lines the NAD(+) pocket. 2 positions are modified to N6-acetyllysine: K353 and K367. E400–F402 lines the NAD(+) pocket. Position 410 is an N6-acetyllysine (K410). S413 is subject to Phosphoserine. K419, K435, and K495 each carry N6-acetyllysine.

This sequence belongs to the aldehyde dehydrogenase family. Homotetramer. Interacts with PRMT3; the interaction is direct, inhibits ALDH1A1 aldehyde dehydrogenase activity and is independent of the methyltransferase activity of PRMT3. In terms of processing, the N-terminus is blocked most probably by acetylation. In terms of tissue distribution, strongly expressed in kidney, lung, testis, intestine, stomach, and trachea, but weakly in the liver.

Its subcellular location is the cytoplasm. It localises to the cytosol. The protein localises to the cell projection. It is found in the axon. The enzyme catalyses an aldehyde + NAD(+) + H2O = a carboxylate + NADH + 2 H(+). It catalyses the reaction all-trans-retinal + NAD(+) + H2O = all-trans-retinoate + NADH + 2 H(+). The catalysed reaction is 9-cis-retinal + NAD(+) + H2O = 9-cis-retinoate + NADH + 2 H(+). It carries out the reaction 11-cis-retinal + NAD(+) + H2O = 11-cis-retinoate + NADH + 2 H(+). The enzyme catalyses 13-cis-retinal + NAD(+) + H2O = 13-cis-retinoate + NADH + 2 H(+). It catalyses the reaction 3-deoxyglucosone + NAD(+) + H2O = 2-dehydro-3-deoxy-D-gluconate + NADH + 2 H(+). The catalysed reaction is (E)-4-hydroxynon-2-enal + NAD(+) + H2O = (E)-4-hydroxynon-2-enoate + NADH + 2 H(+). It carries out the reaction malonaldehyde + NAD(+) + H2O = 3-oxopropanoate + NADH + 2 H(+). The enzyme catalyses hexanal + NAD(+) + H2O = hexanoate + NADH + 2 H(+). It catalyses the reaction propanal + NAD(+) + H2O = propanoate + NADH + 2 H(+). The catalysed reaction is acetaldehyde + NAD(+) + H2O = acetate + NADH + 2 H(+). It carries out the reaction benzaldehyde + NAD(+) + H2O = benzoate + NADH + 2 H(+). The enzyme catalyses 4-aminobutanal + NAD(+) + H2O = 4-aminobutanoate + NADH + 2 H(+). The protein operates within cofactor metabolism; retinol metabolism. Its activity is regulated as follows. Inhibited by chloral hydrate. Functionally, cytosolic dehydrogenase that catalyzes the irreversible oxidation of a wide range of aldehydes to their corresponding carboxylic acid. Functions downstream of retinol dehydrogenases and catalyzes the oxidation of retinaldehyde into retinoic acid, the second step in the oxidation of retinol/vitamin A into retinoic acid. This pathway is crucial to control the levels of retinol and retinoic acid, two important molecules which excess can be teratogenic and cytotoxic. Also oxidizes aldehydes resulting from lipid peroxidation like (E)-4-hydroxynon-2-enal/HNE, malonaldehyde and hexanal that form protein adducts and are highly cytotoxic. By participating for instance to the clearance of (E)-4-hydroxynon-2-enal/HNE in the lens epithelium prevents the formation of HNE-protein adducts and lens opacification. Functions also downstream of fructosamine-3-kinase in the fructosamine degradation pathway by catalyzing the oxidation of 3-deoxyglucosone, the carbohydrate product of fructosamine 3-phosphate decomposition, which is itself a potent glycating agent that may react with lysine and arginine side-chains of proteins. Also has an aminobutyraldehyde dehydrogenase activity and is probably part of an alternative pathway for the biosynthesis of GABA/4-aminobutanoate in midbrain, thereby playing a role in GABAergic synaptic transmission. This chain is Aldehyde dehydrogenase 1A1, found in Rattus norvegicus (Rat).